A 349-amino-acid chain; its full sequence is uncharacterized protein (349 aa).

Phosphoserine is present on Ser2.

This is an uncharacterized protein from Saccharomyces cerevisiae (strain ATCC 204508 / S288c) (Baker's yeast).